The primary structure comprises 60 residues: Mastoparan-VT6 (60 aa).

Positions methionine 1–alanine 27 are cleaved as a signal peptide. 4 AXPX repeats span residues alanine 27–lysine 30, alanine 31–leucine 34, alanine 35–asparagine 38, and alanine 41–glutamate 44. Residues aspartate 28–alanine 45 constitute a propeptide that is removed on maturation. Position 59 is a leucine amide (leucine 59).

This sequence belongs to the MCD family. Mastoparan subfamily. As to expression, expressed by the venom gland.

Its subcellular location is the secreted. Functionally, the synthetic peptide shows antimicrobial activities against Gram-negative bacteria (but not against all strains tested), Gram-positive bacteria (all strains tested) and the fungi C.albicans and C.parapsilosis. Exhibits little hemolytic activity against washed human erythrocytes. The sequence is that of Mastoparan-VT6 from Vespa tropica (Greater banded hornet).